The chain runs to 191 residues: Cell division protein SepF (191 aa).

Positions 150–191 (TSSSPEEASPSSVSPKNTPQYSVENNTAPEPAWGNSKLSAFS) are disordered. Residues 151 to 164 (SSSPEEASPSSVSP) are compositionally biased toward low complexity. The span at 165–177 (KNTPQYSVENNTA) shows a compositional bias: polar residues.

This sequence belongs to the SepF family. Homodimer. Interacts with FtsZ.

The protein resides in the cytoplasm. Its function is as follows. Cell division protein that is part of the divisome complex and is recruited early to the Z-ring. Probably stimulates Z-ring formation, perhaps through the cross-linking of FtsZ protofilaments. Its function overlaps with FtsA. In Prochlorococcus marinus (strain MIT 9312), this protein is Cell division protein SepF.